We begin with the raw amino-acid sequence, 426 residues long: 10-deoxymethynolide desosaminyltransferase (426 aa).

The protein belongs to the glycosyltransferase 28 family. In terms of assembly, forms a complex with DesVIII.

The catalysed reaction is 10-deoxymethynolide + dTDP-alpha-D-desosamine = 10-deoxymethymycin + dTDP + H(+). Its pathway is antibiotic biosynthesis. Its function is as follows. Involved in the biosynthesis of the macrolide antibiotics methymycin, neomethymycin, narbomycin, and pikromycin. Catalyzes the attachment of dTDP-D-desosamine onto 12- and 14-membered macrolactone rings 10-deoxymethynolide and narbonolide to produce 10-deoxymethymycin (YC-17) and narbomycin. DesVII is unique among glycosyltransferases in that it requires an additional protein component, DesVIII, for its activity. DesVII can recognize and process not only cyclic substrates of different ring size, but also a variety of linear substrates albeit with reduced, but measurable activities. Both L-sugars and D-sugars are recognized as substrates and variant substitutions at C-3 and C-4 are tolerated, but deoxygenation at C-6 is required. The polypeptide is 10-deoxymethynolide desosaminyltransferase (Streptomyces venezuelae).